A 243-amino-acid chain; its full sequence is Probable transcriptional regulatory protein LCABL_11860 (243 aa).

The disordered stretch occupies residues 1–23 (MSGHSKWHNIQGRKNAQDSKRGK).

It belongs to the TACO1 family.

Its subcellular location is the cytoplasm. The chain is Probable transcriptional regulatory protein LCABL_11860 from Lacticaseibacillus casei (strain BL23) (Lactobacillus casei).